The sequence spans 196 residues: Molybdenum cofactor guanylyltransferase (196 aa).

Residues 10–12, K23, N51, D69, and D99 each bind GTP; that span reads LAG. A Mg(2+)-binding site is contributed by D99.

The protein belongs to the MobA family. As to quaternary structure, monomer. Mg(2+) serves as cofactor.

It is found in the cytoplasm. It carries out the reaction Mo-molybdopterin + GTP + H(+) = Mo-molybdopterin guanine dinucleotide + diphosphate. Its function is as follows. Transfers a GMP moiety from GTP to Mo-molybdopterin (Mo-MPT) cofactor (Moco or molybdenum cofactor) to form Mo-molybdopterin guanine dinucleotide (Mo-MGD) cofactor. This chain is Molybdenum cofactor guanylyltransferase, found in Shewanella frigidimarina (strain NCIMB 400).